The sequence spans 512 residues: Intermediate filament family orphan 2 (512 aa).

Residues 50-479 (NIHLLKGLNV…RLIKGSADRN (430 aa)) enclose the IF rod domain. Residues 473 to 512 (KGSADRNSPSPSSVASSDSGSTDEIQEDLEREADVEPMVS) are disordered. Low complexity predominate over residues 480–492 (SPSPSSVASSDSG). Residues 496 to 512 (EIQEDLEREADVEPMVS) are compositionally biased toward acidic residues.

The protein belongs to the intermediate filament family.

This chain is Intermediate filament family orphan 2 (Iffo2), found in Mus musculus (Mouse).